We begin with the raw amino-acid sequence, 98 residues long: UPF0358 protein LCA_1078 (98 aa).

It belongs to the UPF0358 family.

In Latilactobacillus sakei subsp. sakei (strain 23K) (Lactobacillus sakei subsp. sakei), this protein is UPF0358 protein LCA_1078.